A 317-amino-acid polypeptide reads, in one-letter code: tRNA-dihydrouridine(16) synthase (317 aa).

Residues P7 to E9 and Q68 each bind FMN. Residue C98 is the Proton donor of the active site. FMN-binding positions include K139, N199–E201, and G223–R224.

The protein belongs to the Dus family. DusC subfamily. The cofactor is FMN.

The enzyme catalyses 5,6-dihydrouridine(16) in tRNA + NADP(+) = uridine(16) in tRNA + NADPH + H(+). It carries out the reaction 5,6-dihydrouridine(16) in tRNA + NAD(+) = uridine(16) in tRNA + NADH + H(+). Catalyzes the synthesis of 5,6-dihydrouridine (D), a modified base found in the D-loop of most tRNAs, via the reduction of the C5-C6 double bond in target uridines. Specifically modifies U16 in tRNAs. This is tRNA-dihydrouridine(16) synthase from Pseudomonas syringae pv. tomato (strain ATCC BAA-871 / DC3000).